Reading from the N-terminus, the 95-residue chain is Aspartyl/glutamyl-tRNA(Asn/Gln) amidotransferase subunit C (95 aa).

It belongs to the GatC family. Heterotrimer of A, B and C subunits.

The catalysed reaction is L-glutamyl-tRNA(Gln) + L-glutamine + ATP + H2O = L-glutaminyl-tRNA(Gln) + L-glutamate + ADP + phosphate + H(+). The enzyme catalyses L-aspartyl-tRNA(Asn) + L-glutamine + ATP + H2O = L-asparaginyl-tRNA(Asn) + L-glutamate + ADP + phosphate + 2 H(+). Its function is as follows. Allows the formation of correctly charged Asn-tRNA(Asn) or Gln-tRNA(Gln) through the transamidation of misacylated Asp-tRNA(Asn) or Glu-tRNA(Gln) in organisms which lack either or both of asparaginyl-tRNA or glutaminyl-tRNA synthetases. The reaction takes place in the presence of glutamine and ATP through an activated phospho-Asp-tRNA(Asn) or phospho-Glu-tRNA(Gln). This is Aspartyl/glutamyl-tRNA(Asn/Gln) amidotransferase subunit C from Phenylobacterium zucineum (strain HLK1).